Consider the following 138-residue polypeptide: Small ribosomal subunit protein uS11c (138 aa).

Residues 1–22 (MAKPILRVGSRKNTRSASRKNV) are disordered. Residues 9–22 (GSRKNTRSASRKNV) are compositionally biased toward basic residues.

Belongs to the universal ribosomal protein uS11 family. In terms of assembly, part of the 30S ribosomal subunit.

The protein resides in the plastid. The protein localises to the chloroplast. In Draba nemorosa (Woodland whitlowgrass), this protein is Small ribosomal subunit protein uS11c.